A 96-amino-acid chain; its full sequence is Large ribosomal subunit protein uL23 (96 aa).

This sequence belongs to the universal ribosomal protein uL23 family. Part of the 50S ribosomal subunit. Contacts protein L29, and trigger factor when it is bound to the ribosome.

Functionally, one of the early assembly proteins it binds 23S rRNA. One of the proteins that surrounds the polypeptide exit tunnel on the outside of the ribosome. Forms the main docking site for trigger factor binding to the ribosome. The chain is Large ribosomal subunit protein uL23 from Caldicellulosiruptor bescii (strain ATCC BAA-1888 / DSM 6725 / KCTC 15123 / Z-1320) (Anaerocellum thermophilum).